The following is an 820-amino-acid chain: Sucrose synthase 2 (820 aa).

The GT-B glycosyltransferase stretch occupies residues 276–753 (MVFNVVILSP…GLKRIYEKYT (478 aa)).

It belongs to the glycosyltransferase 1 family. Plant sucrose synthase subfamily.

It catalyses the reaction an NDP-alpha-D-glucose + D-fructose = a ribonucleoside 5'-diphosphate + sucrose + H(+). Sucrose-cleaving enzyme that provides UDP-glucose and fructose for various metabolic pathways. This chain is Sucrose synthase 2, found in Tulipa gesneriana (Garden tulip).